The primary structure comprises 415 residues: Diaminopimelate decarboxylase (415 aa).

Residue lysine 60 is modified to N6-(pyridoxal phosphate)lysine. Pyridoxal 5'-phosphate-binding positions include glycine 239 and 274-277 (EPGR). The substrate site is built by arginine 277, arginine 313, and tyrosine 317. The Proton donor role is filled by cysteine 344. Positions 345 and 372 each coordinate substrate. Tyrosine 372 serves as a coordination point for pyridoxal 5'-phosphate.

Belongs to the Orn/Lys/Arg decarboxylase class-II family. LysA subfamily. In terms of assembly, homodimer. It depends on pyridoxal 5'-phosphate as a cofactor.

It carries out the reaction meso-2,6-diaminopimelate + H(+) = L-lysine + CO2. Its pathway is amino-acid biosynthesis; L-lysine biosynthesis via DAP pathway; L-lysine from DL-2,6-diaminopimelate: step 1/1. Its function is as follows. Specifically catalyzes the decarboxylation of meso-diaminopimelate (meso-DAP) to L-lysine. In Haemophilus influenzae (strain ATCC 51907 / DSM 11121 / KW20 / Rd), this protein is Diaminopimelate decarboxylase.